A 235-amino-acid chain; its full sequence is 2-C-methyl-D-erythritol 4-phosphate cytidylyltransferase (235 aa).

It belongs to the IspD/TarI cytidylyltransferase family. IspD subfamily.

It carries out the reaction 2-C-methyl-D-erythritol 4-phosphate + CTP + H(+) = 4-CDP-2-C-methyl-D-erythritol + diphosphate. It participates in isoprenoid biosynthesis; isopentenyl diphosphate biosynthesis via DXP pathway; isopentenyl diphosphate from 1-deoxy-D-xylulose 5-phosphate: step 2/6. Catalyzes the formation of 4-diphosphocytidyl-2-C-methyl-D-erythritol from CTP and 2-C-methyl-D-erythritol 4-phosphate (MEP). This is 2-C-methyl-D-erythritol 4-phosphate cytidylyltransferase from Pseudomonas putida (strain ATCC 47054 / DSM 6125 / CFBP 8728 / NCIMB 11950 / KT2440).